The following is a 242-amino-acid chain: uncharacterized protein (242 aa).

Disordered regions lie at residues 43-70 (SRRSGKTSAVLKAGRQSVSGRKNSTSKD) and 112-162 (RMSR…VTPR). A compositionally biased stretch (polar residues) spans 58–70 (QSVSGRKNSTSKD). 2 stretches are compositionally biased toward low complexity: residues 122-139 (ERAAAAAAAAAGGDAGHA) and 147-162 (ADGARAPRSPGQVTPR).

This is an uncharacterized protein from Homo sapiens (Human).